Here is a 318-residue protein sequence, read N- to C-terminus: Sol locus transcriptional repressor (318 aa).

TPR repeat units lie at residues 65–98 (ANAY…RPKT), 99–132 (INDV…QPNV), 133–166 (GISY…GSTN), and 167–199 (SVYR…EPEK).

Functionally, transcriptional repressor of the sol locus (adhE/aad, ctfA, ctfB and adc) genes for butanol and acetone formation. This is Sol locus transcriptional repressor (solR) from Clostridium acetobutylicum (strain ATCC 824 / DSM 792 / JCM 1419 / IAM 19013 / LMG 5710 / NBRC 13948 / NRRL B-527 / VKM B-1787 / 2291 / W).